Reading from the N-terminus, the 109-residue chain is Parvalbumin, muscle (109 aa).

At alanine 1 the chain carries N-acetylalanine. 2 consecutive EF-hand domains span residues 38 to 73 (KSPE…FTPD) and 77 to 109 (LSDK…VAES). Residues aspartate 51, aspartate 53, serine 55, glutamate 62, aspartate 90, aspartate 92, aspartate 94, lysine 96, and glutamate 101 each coordinate Ca(2+).

Belongs to the parvalbumin family.

Its function is as follows. In muscle, parvalbumin is thought to be involved in relaxation after contraction. It binds two calcium ions. This chain is Parvalbumin, muscle, found in Gallus gallus (Chicken).